The sequence spans 705 residues: Polyribonucleotide nucleotidyltransferase (705 aa).

Residues aspartate 486 and aspartate 492 each contribute to the Mg(2+) site. A KH domain is found at 553–612 (PRIYTMKINPEKIKDVIGKGGSVIRALTDETGTTIEIEDDGTIKIAATDGDKAKHAIRRI). In terms of domain architecture, S1 motif spans 622–690 (GRIYAGKVTR…RQGRIRLSIK (69 aa)).

This sequence belongs to the polyribonucleotide nucleotidyltransferase family. As to quaternary structure, component of the RNA degradosome, which is a multiprotein complex involved in RNA processing and mRNA degradation. Mg(2+) serves as cofactor.

It localises to the cytoplasm. It catalyses the reaction RNA(n+1) + phosphate = RNA(n) + a ribonucleoside 5'-diphosphate. Involved in mRNA degradation. Catalyzes the phosphorolysis of single-stranded polyribonucleotides processively in the 3'- to 5'-direction. The protein is Polyribonucleotide nucleotidyltransferase of Yersinia pseudotuberculosis serotype O:3 (strain YPIII).